Consider the following 203-residue polypeptide: DNA-directed RNA polymerase subunit gamma (203 aa).

Positions 34, 36, 49, and 52 each coordinate Zn(2+).

The protein belongs to the RNA polymerase beta' chain family. RpoC1 subfamily. In cyanobacteria the RNAP catalytic core is composed of 2 alpha, 1 beta, 1 beta', 1 gamma and 1 omega subunit. When a sigma factor is associated with the core the holoenzyme is formed, which can initiate transcription. Requires Zn(2+) as cofactor.

The enzyme catalyses RNA(n) + a ribonucleoside 5'-triphosphate = RNA(n+1) + diphosphate. Its function is as follows. DNA-dependent RNA polymerase catalyzes the transcription of DNA into RNA using the four ribonucleoside triphosphates as substrates. The sequence is that of DNA-directed RNA polymerase subunit gamma (rpoC1) from Prochlorothrix hollandica.